A 67-amino-acid chain; its full sequence is Large ribosomal subunit protein uL29 (67 aa).

The protein belongs to the universal ribosomal protein uL29 family.

The sequence is that of Large ribosomal subunit protein uL29 from Pelotomaculum thermopropionicum (strain DSM 13744 / JCM 10971 / SI).